A 95-amino-acid chain; its full sequence is Ribonuclease P protein component 1 (95 aa).

Belongs to the eukaryotic/archaeal RNase P protein component 1 family. Consists of a catalytic RNA component and at least 4 protein subunits. Forms a subcomplex with Rnp4 which stimulates the catalytic RNA.

The protein resides in the cytoplasm. The catalysed reaction is Endonucleolytic cleavage of RNA, removing 5'-extranucleotides from tRNA precursor.. In terms of biological role, part of ribonuclease P, a protein complex that generates mature tRNA molecules by cleaving their 5'-ends. The polypeptide is Ribonuclease P protein component 1 (Methanocaldococcus jannaschii (strain ATCC 43067 / DSM 2661 / JAL-1 / JCM 10045 / NBRC 100440) (Methanococcus jannaschii)).